The sequence spans 419 residues: Adenylosuccinate synthetase (419 aa).

GTP-binding positions include 12 to 18 (GDEGKGK) and 40 to 42 (GHT). The active-site Proton acceptor is Asp13. Residues Asp13 and Gly40 each coordinate Mg(2+). Residues 13-16 (DEGK), 38-41 (NAGH), Thr128, Arg142, Gln220, Thr235, and Arg299 each bind IMP. The active-site Proton donor is His41. 295–301 (SITKRPR) contacts substrate. Residues Arg301, 327-329 (KSD), and 407-409 (SLG) each bind GTP.

This sequence belongs to the adenylosuccinate synthetase family. In terms of assembly, homodimer. It depends on Mg(2+) as a cofactor.

It localises to the cytoplasm. It catalyses the reaction IMP + L-aspartate + GTP = N(6)-(1,2-dicarboxyethyl)-AMP + GDP + phosphate + 2 H(+). It functions in the pathway purine metabolism; AMP biosynthesis via de novo pathway; AMP from IMP: step 1/2. In terms of biological role, plays an important role in the de novo pathway of purine nucleotide biosynthesis. Catalyzes the first committed step in the biosynthesis of AMP from IMP. This chain is Adenylosuccinate synthetase, found in Azobacteroides pseudotrichonymphae genomovar. CFP2.